Consider the following 156-residue polypeptide: Large ribosomal subunit protein uL15 (156 aa).

A compositionally biased stretch (basic and acidic residues) spans 1 to 11; sequence MKLNDLRDKPG. The disordered stretch occupies residues 1–40; sequence MKLNDLRDKPGSVKARKRVGRGIGSGTGKTGGRGVKGQKS. Residues 21 to 35 show a composition bias toward gly residues; it reads RGIGSGTGKTGGRGV.

It belongs to the universal ribosomal protein uL15 family. As to quaternary structure, part of the 50S ribosomal subunit.

Functionally, binds to the 23S rRNA. The chain is Large ribosomal subunit protein uL15 from Brucella anthropi (strain ATCC 49188 / DSM 6882 / CCUG 24695 / JCM 21032 / LMG 3331 / NBRC 15819 / NCTC 12168 / Alc 37) (Ochrobactrum anthropi).